The primary structure comprises 662 residues: MGNGVTKLSICFTGGGGERLRPKDISVLLPDPLDEGLGHSFCYVRPDPTLISSSKVHSEEDTTTTTFRTISGASVSANTATPLSTSLYDPYGHIDRAAAFESTTSFSSIPLQPIPKSSGPIVLGSGPIERGFLSGPIERGFMSGPLDRVGLFSGPLDKPNSDHHHQFQRSFSHGLALRVGSRKRSLVRILRRAISKTMSRGQNSIVAPIKSVKDSDNWGIRSEKSRNLHNENLTVNSLNFSSEVSLDDDVSLENQNLQWAQGKAGEDRVHVVVSEEHGWLFVGIYDGFNGPDAPDYLLSHLYPVVHRELKGLLWDDSNVESKSQDLERSNGDESCSNQEKDETCERWWRCEWDRESQDLDRRLKEQISRRSGSDRLTNHSEVLEALSQALRKTEEAYLDTADKMLDENPELALMGSCVLVMLMKGEDIYVMNVGDSRAVLGQKSEPDYWLAKIRQDLERINEETMMNDLEGCEGDQSSLVPNLSAFQLTVDHSTNIEEEVERIRNEHPDDVTAVTNERVKGSLKVTRAFGAGFLKQPKWNNALLEMFQIDYVGKSPYINCLPSLYHHRLGSKDRFLILSSDGLYQYFTNEEAVSEVELFITLQPEGDPAQHLVQELLFRAAKKAGMDFHELLEIPQGERRRYHDDVSIVVISLEGRMWKSCV.

Ser153 carries the post-translational modification Phosphoserine. The PPM-type phosphatase domain occupies 249–653; it reads DVSLENQNLQ…DDVSIVVISL (405 aa). Positions 286, 287, 581, and 644 each coordinate Mn(2+).

It belongs to the PP2C family. Mg(2+) serves as cofactor. Requires Mn(2+) as cofactor. Expressed in seedlings, roots, leaves, stems, young inflorescences, flowers and siliques.

The protein localises to the nucleus. It carries out the reaction O-phospho-L-seryl-[protein] + H2O = L-seryl-[protein] + phosphate. The catalysed reaction is O-phospho-L-threonyl-[protein] + H2O = L-threonyl-[protein] + phosphate. In terms of biological role, involved in leaf development regulation. This chain is Probable protein phosphatase 2C 4 (PLL5), found in Arabidopsis thaliana (Mouse-ear cress).